The chain runs to 378 residues: D-alanine--D-alanine ligase (378 aa).

Positions 157–368 constitute an ATP-grasp domain; the sequence is KVVFESAGLS…YGDLIDELIH (212 aa). 189–244 contributes to the ATP binding site; it reads VDKLGFPVFVKPARAGSSMGISKVDSMEGLDAAIDEARRHDLKLVIEAGIVGREIE. Mg(2+) contacts are provided by Asp322, Glu335, and Asn337.

This sequence belongs to the D-alanine--D-alanine ligase family. The cofactor is Mg(2+). Mn(2+) is required as a cofactor.

It is found in the cytoplasm. The enzyme catalyses 2 D-alanine + ATP = D-alanyl-D-alanine + ADP + phosphate + H(+). The protein operates within cell wall biogenesis; peptidoglycan biosynthesis. In terms of biological role, cell wall formation. The polypeptide is D-alanine--D-alanine ligase (Paenarthrobacter aurescens (strain TC1)).